The sequence spans 268 residues: Deoxyuridine 5'-triphosphate nucleotidohydrolase (268 aa).

Residues 172-174 (RSS) and 263-264 (FG) contribute to the substrate site.

The protein belongs to the dUTPase family. Requires Mg(2+) as cofactor.

It catalyses the reaction dUTP + H2O = dUMP + diphosphate + H(+). Functionally, involved in nucleotide metabolism: produces dUMP, the immediate precursor of thymidine nucleotides and decreases the intracellular concentration of dUTP to avoid uracil incorporation into viral DNA. The polypeptide is Deoxyuridine 5'-triphosphate nucleotidohydrolase (Suid herpesvirus 1 (strain Kaplan) (SuHV-1)).